The primary structure comprises 70 residues: Alpha-elapitoxin-Ast2a (70 aa).

5 disulfide bridges follow: cysteine 3/cysteine 20, cysteine 13/cysteine 41, cysteine 26/cysteine 30, cysteine 45/cysteine 56, and cysteine 57/cysteine 62. The residue at position 70 (serine 70) is a Serine amide.

This sequence belongs to the three-finger toxin family. Long-chain subfamily. Type II alpha-neurotoxin sub-subfamily. Expressed by the venom gland.

The protein resides in the secreted. Its function is as follows. Binds with high affinity to muscular (alpha-1/CHRNA1) and neuronal (alpha-7/CHRNA7) nicotinic acetylcholine receptor (nAChR) and inhibits acetylcholine from binding to the receptor, thereby impairing neuromuscular and neuronal transmission. This Hydrophis stokesii (Stokes's sea snake) protein is Alpha-elapitoxin-Ast2a.